The following is a 544-amino-acid chain: MNSESVDSDVAASTSNKGNELCSSSTDITSLSVSSPNESVIHSSHSASEADEYVCKLSYEGNRKKRIYNGSAEAGKEKKLQKQRAQEERIRQKEAERLKREKERQQREQEKKLREQEKIAAKKMKELEKLEKERIRLQEQQRRKEERDQKLREKEEAQRLRQEQILNKERQQLKLNNFFTKGVEKRIAPNENFVADKTDELNEFEKEFRPFFIKHQMSLSKYPSPNESDSFLDEVLSTSKSYPLKLNDIFTPSDAVSSANSLGVSNRNSENEVRQLMSAYQDPSVSKPQEILSCLSQIPIKFIFFYQDVRPPYFGSYTKTHSHGSNVLLNPWLEDEDIDYTYDSEAEWVADEEDDGEDLESEDEEVDNSDDIVEDGDNAFVDDEDDDKDSVNASNTHRSSGPLEVIVEGPVWDSKFLPDFNCLSLIEPISSFSASTYLQIDPKEDLWASQDTAPASSGMTIGPTSSLSDDLQVRFPSEDIPKFIEYVRNSHDNKVFLIENLRHMFPYVTKNIISETLGKVAVRKGKSVSDGWIIKENFASLLSS.

Polar residues predominate over residues 1–22 (MNSESVDSDVAASTSNKGNELC). Disordered regions lie at residues 1–52 (MNSE…EADE), 67–117 (IYNG…REQE), and 138–160 (QEQQ…AQRL). Low complexity predominate over residues 23 to 35 (SSSTDITSLSVSS). Residues 36–47 (PNESVIHSSHSA) are compositionally biased toward polar residues. Positions 56 to 170 (KLSYEGNRKK…RQEQILNKER (115 aa)) are interaction with DNA and pcn1/PCNA. Positions 74–117 (AGKEKKLQKQRAQEERIRQKEAERLKREKERQQREQEKKLREQE) are enriched in basic and acidic residues. Residues 76 to 176 (KEKKLQKQRA…NKERQQLKLN (101 aa)) adopt a coiled-coil conformation. Positions 172 to 179 (QLKLNNFF) match the PCNA-interaction protein (PIP box) motif. The tract at residues 325-396 (SNVLLNPWLE…DKDSVNASNT (72 aa)) is interaction with histones H3/H4. Positions 351-388 (DEEDDGEDLESEDEEVDNSDDIVEDGDNAFVDDEDDDK) are enriched in acidic residues. A disordered region spans residues 351-400 (DEEDDGEDLESEDEEVDNSDDIVEDGDNAFVDDEDDDKDSVNASNTHRSS).

This sequence belongs to the RLF2 family. As to quaternary structure, component of chromatin assembly factor 1 (CAF-1), composed of pcf1, pcf2 and pcf3. Interacts (via PIP motif) with pcn1/PCNA; the interaction is direct and occurs during S-phase. Interacts with swi6 at the G1/S-phase transition and early S-phase, but not in the G2 phase. The CAF-1 complex interacts with histone H3/H4 dimers.

The protein resides in the nucleus. Acts as a component of the histone chaperone complex chromatin assembly factor 1 (CAF-1), which assembles histone octamers onto DNA during replication and repair. CAF-1 performs the first step of the nucleosome assembly process, bringing newly synthesized histones H3 and H4 to replicating DNA; histones H2A/H2B can bind to this chromatin precursor subsequent to DNA replication to complete the histone octamer. Plays a role in the maintenance of heterochromatin. This chain is Chromatin assembly factor 1 subunit A, found in Schizosaccharomyces pombe (strain 972 / ATCC 24843) (Fission yeast).